Consider the following 424-residue polypeptide: MSLALGCVADDYTGASDLANTLTKAGLRTIQTIGVPEAGRALPEADAVVVALKSRSIPADQAVARSREAERWLRARGAAHVMFKVCSTFDSTDAGNIGPVMDALRADAGETVALVTPAFPETGRSVYQGNLFVGSVPLNESPLKDHPLNPMRDANLVRVLGRQSRSPVGLIDTATVARGAEAVAARLDALAQEGKGAAIADAIFDSDLEVLGRAILDRKFSVGASGLGLGLARALAADGRGTRDAAGAAVGEPVGGASACLAGSCSQATLQQVAAAEAIMPVLRLDPARLLAGDDVVAEALAFAEERLASGPVLIATSAPPEAVRALQAAHGVDAAGHAIEAALAAIAEGLVARGVRRLVVAGGETSGAVVDRLGLTAFLLGPEIAAGVPVLRTAGRPEPMLLALKSGNFGGADFFGRALDMMA.

ATP-binding positions include Ser264, 363–366 (GGET), and Gly408.

It belongs to the four-carbon acid sugar kinase family.

It catalyses the reaction 3-dehydro-L-erythronate + ATP = 3-dehydro-4-O-phospho-L-erythronate + ADP + H(+). The enzyme catalyses 3-dehydro-D-erythronate + ATP = 3-dehydro-4-O-phospho-D-erythronate + ADP + H(+). Catalyzes the ATP-dependent phosphorylation of 3-oxo-tetronate to 3-oxo-tetronate 4-phosphate. In Methylobacterium radiotolerans (strain ATCC 27329 / DSM 1819 / JCM 2831 / NBRC 15690 / NCIMB 10815 / 0-1), this protein is 3-oxo-tetronate kinase.